We begin with the raw amino-acid sequence, 171 residues long: S-ribosylhomocysteine lyase (171 aa).

Residues His54, His58, and Cys128 each coordinate Fe cation.

The protein belongs to the LuxS family. Homodimer. Fe cation serves as cofactor.

It carries out the reaction S-(5-deoxy-D-ribos-5-yl)-L-homocysteine = (S)-4,5-dihydroxypentane-2,3-dione + L-homocysteine. Functionally, involved in the synthesis of autoinducer 2 (AI-2) which is secreted by bacteria and is used to communicate both the cell density and the metabolic potential of the environment. The regulation of gene expression in response to changes in cell density is called quorum sensing. Catalyzes the transformation of S-ribosylhomocysteine (RHC) to homocysteine (HC) and 4,5-dihydroxy-2,3-pentadione (DPD). The chain is S-ribosylhomocysteine lyase from Serratia proteamaculans (strain 568).